The chain runs to 475 residues: C3a anaphylatoxin chemotactic receptor (475 aa).

Residues 1–23 lie on the Extracellular side of the membrane; it reads MESSSAETNSTGLHLEPQYQPET. The N-linked (GlcNAc...) asparagine glycan is linked to asparagine 9. The helical transmembrane segment at 24-46 threads the bilayer; it reads ILAMAILGLTFVLGLPGNGLVLW. Topologically, residues 47–57 are cytoplasmic; that stretch reads VAGLKMRRTVN. A helical membrane pass occupies residues 58–80; sequence TVWFLHLTVADFVCCLSLPFSMA. Residues 81–96 lie on the Extracellular side of the membrane; it reads HLALRGYWPYGEILCK. An intrachain disulfide couples cysteine 95 to cysteine 172. A helical transmembrane segment spans residues 97-118; sequence FIPTVIIFNMFASVFLLTAISL. The Cytoplasmic segment spans residues 119–139; sequence DRCLMVLKPIWCQNHRNVRTA. Residues 140–160 traverse the membrane as a helical segment; sequence CIICGCIWLVAFVLCIPVFVY. Residues 161–331 lie on the Extracellular side of the membrane; the sequence is RETFTLENHT…RLLKVITFTR (171 aa). Asparagine 168 is a glycosylation site (N-linked (GlcNAc...) asparagine). Residues tyrosine 174 and tyrosine 183 each carry the sulfotyrosine modification. N-linked (GlcNAc...) asparagine glycans are attached at residues asparagine 273 and asparagine 292. Residues 332 to 351 form a helical membrane-spanning segment; the sequence is LVVGFLLPMIIMVACYTLII. Residues 352–368 are Cytoplasmic-facing; it reads FRMRRVRVVKSWNKALH. The helical transmembrane segment at 369 to 391 threads the bilayer; that stretch reads LAMVVVTIFLICWAPYHVFGVLI. Over 392-408 the chain is Extracellular; it reads LFINPESRVGAALLSWD. A helical transmembrane segment spans residues 409-429; the sequence is HVSIALASANSCFNPFLYALL. Residues 430-475 lie on the Cytoplasmic side of the membrane; it reads GRDLRKRVRQSMKGILEAAFSEDISKSTSFIQAKAFSEKHSLSTNV. Serine 450 bears the Phosphoserine mark.

The protein belongs to the G-protein coupled receptor 1 family. In terms of assembly, interacts with VGF-derived peptide TLQP-21. As to expression, expressed in the heart, kidney, lung, liver, peritoneal macrophages and spleen.

It is found in the cell membrane. Receptor for the chemotactic and inflammatory peptide anaphylatoxin C3a. This receptor stimulates chemotaxis, granule enzyme release and superoxide anion production. The chain is C3a anaphylatoxin chemotactic receptor (C3AR1) from Cavia porcellus (Guinea pig).